We begin with the raw amino-acid sequence, 164 residues long: Phosphopantetheine adenylyltransferase (164 aa).

Ser-11 contributes to the substrate binding site. ATP is bound by residues 11-12 (SF) and His-19. Residues Lys-43, Leu-75, and Arg-89 each contribute to the substrate site. ATP contacts are provided by residues 90 to 92 (GLR), Glu-100, and 125 to 131 (YGYLSSS).

The protein belongs to the bacterial CoaD family. As to quaternary structure, homohexamer. Mg(2+) serves as cofactor.

Its subcellular location is the cytoplasm. The enzyme catalyses (R)-4'-phosphopantetheine + ATP + H(+) = 3'-dephospho-CoA + diphosphate. It participates in cofactor biosynthesis; coenzyme A biosynthesis; CoA from (R)-pantothenate: step 4/5. Its function is as follows. Reversibly transfers an adenylyl group from ATP to 4'-phosphopantetheine, yielding dephospho-CoA (dPCoA) and pyrophosphate. This chain is Phosphopantetheine adenylyltransferase, found in Geobacter sulfurreducens (strain ATCC 51573 / DSM 12127 / PCA).